The primary structure comprises 1301 residues: Zinc finger protein 532 (1301 aa).

Disordered regions lie at residues 26–206 (PKAA…RETE), 223–266 (AEDK…SSSK), and 281–366 (KAAS…IKTI). Positions 32–52 (SGHDDHESHMKQNAHGEDDSH) are enriched in basic and acidic residues. The segment covering 84–101 (PTGNGLHNGFLTASSLDS) has biased composition (polar residues). Residues 102-111 (YSKDGAKSLK) show a composition bias toward basic and acidic residues. A compositionally biased stretch (polar residues) spans 122 to 133 (KDSTFSQFSPIS). Serine 130, serine 133, and serine 134 each carry phosphoserine. The segment covering 136-151 (EEFDDDEKIEVDDPPD) has biased composition (acidic residues). Over residues 158-170 (SFRSNVLTGSAPQ) the composition is skewed to polar residues. At lysine 175 the chain carries N6-acetyllysine. Polar residues predominate over residues 182–195 (ENSSKTGLSTSGNV). Basic and acidic residues-rich tracts occupy residues 196-206 (EKNKAVKRETE) and 223-250 (AEDK…EKND). The residue at position 205 (threonine 205) is a Phosphothreonine. Phosphoserine occurs at positions 252, 307, and 314. A compositionally biased stretch (basic and acidic residues) spans 303-315 (EVNDSPRAADKSP). A compositionally biased stretch (low complexity) spans 337–359 (SISSENSSKGSPSSPAGSTPAIP). Serine 434 bears the Phosphoserine mark. Residues lysine 459 and lysine 516 each participate in a glycyl lysine isopeptide (Lys-Gly) (interchain with G-Cter in SUMO2) cross-link. A C2H2-type 1; degenerate zinc finger spans residues 616 to 635 (YKCLECGDSFALEKSLTQHY). The C2H2-type 2; degenerate zinc-finger motif lies at 754 to 779 (LKCLECNEVFQDETSLATHFQQAADT). C2H2-type zinc fingers lie at residues 783–805 (KTCT…QRIH), 842–865 (FRCV…QGSH), 870–893 (YKCP…YTQH), 905–927 (YKCS…FDQH), and 936–959 (FKCP…KSMH). Residue lysine 980 forms a Glycyl lysine isopeptide (Lys-Gly) (interchain with G-Cter in SUMO2) linkage. A disordered region spans residues 983 to 1017 (TQNSANQNKEDTKSMNGKEKLEKKSPSPVKKSMET). A compositionally biased stretch (basic and acidic residues) spans 990–1017 (NKEDTKSMNGKEKLEKKSPSPVKKSMET). C2H2-type zinc fingers lie at residues 1025–1048 (WTCW…RKEH) and 1055–1078 (HPCR…RIKH). Residues 1085 to 1111 (YACSHCPDSRRTFTKRLMLEKHVQLMH) form a C2H2-type 10; degenerate zinc finger. Serine 1140 carries the phosphoserine modification. Residues lysine 1144 and lysine 1167 each participate in a glycyl lysine isopeptide (Lys-Gly) (interchain with G-Cter in SUMO2) cross-link. The C2H2-type 11 zinc finger occupies 1203–1226 (YQCRECGLCYTSHVSLSRHLFIVH). The disordered stretch occupies residues 1230–1263 (EPQPVSKQNGAGEDNQQENKPSHEDESPDGAVSD). A C2H2-type 12 zinc finger spans residues 1264–1286 (RKCKVCAKTFETEAALNTHMRTH).

Belongs to the krueppel C2H2-type zinc-finger protein family.

The protein resides in the nucleus. In terms of biological role, may be involved in transcriptional regulation. The polypeptide is Zinc finger protein 532 (ZNF532) (Homo sapiens (Human)).